A 358-amino-acid polypeptide reads, in one-letter code: MDKDKKGAKQDLSEILQFVAPGTPLREGIENVLRAKTGGLIVVGFNDKVKEVVDGGFHINSSFSPAHLYELAKMDGAIILSDSGQKILYANTQLMPEATIPSSETGMRHRTAERVAKQTGCLIIAISERRNVITLYQENMKYILKDIGFILTKANQAIQTLEKYKLILDHAISNLNALEFEELVTFGDVISVLHRYEMVLRIKNEINMYIKELGTEGHLIRLQVSELITDMEQEAALFVKDYVKEKIKDPFVLLKQLQDMSSFELLDDAILLKLLGYSATTNMEEYVFPRGYRLLHKIPRLPMPIVENVVEAFGHLKLIIEADVKDLDEVEGIGAVRAQKIKKGLKRLQEKHYTDRQL.

One can recognise a DAC domain in the interval 9-147 (KQDLSEILQF…ENMKYILKDI (139 aa)). Residues Gly76, Leu94, and 107-111 (MRHRT) each bind ATP.

It belongs to the DisA family. Homooctamer. The cofactor is Mg(2+).

It carries out the reaction 2 ATP = 3',3'-c-di-AMP + 2 diphosphate. In terms of biological role, participates in a DNA-damage check-point that is active prior to asymmetric division when DNA is damaged. DisA forms globular foci that rapidly scan along the chromosomes during sporulation, searching for lesions. When a lesion is present, DisA pauses at the lesion site. This triggers a cellular response that culminates in a temporary block in sporulation initiation. Functionally, also has diadenylate cyclase activity, catalyzing the condensation of 2 ATP molecules into cyclic di-AMP (c-di-AMP). c-di-AMP acts as a signaling molecule that couples DNA integrity with progression of sporulation. The rise in c-di-AMP level generated by DisA while scanning the chromosome, operates as a positive signal that advances sporulation; upon encountering a lesion, the DisA focus arrests at the damaged site and halts c-di-AMP synthesis. The sequence is that of DNA integrity scanning protein DisA from Bacillus licheniformis (strain ATCC 14580 / DSM 13 / JCM 2505 / CCUG 7422 / NBRC 12200 / NCIMB 9375 / NCTC 10341 / NRRL NRS-1264 / Gibson 46).